Here is a 134-residue protein sequence, read N- to C-terminus: Arsenate reductase (134 aa).

Active-site nucleophile residues include Cys11, Cys83, and Cys90. 2 disulfides stabilise this stretch: Cys11–Cys83 and Cys83–Cys90.

This sequence belongs to the low molecular weight phosphotyrosine protein phosphatase family. Thioredoxin-coupled ArsC subfamily.

It localises to the cytoplasm. The enzyme catalyses arsenate + [thioredoxin]-dithiol + H(+) = arsenite + [thioredoxin]-disulfide + H2O. Functionally, catalyzes the reduction of arsenate [As(V)] to arsenite [As(III)]. The sequence is that of Arsenate reductase from Bacillus cereus (strain ATCC 14579 / DSM 31 / CCUG 7414 / JCM 2152 / NBRC 15305 / NCIMB 9373 / NCTC 2599 / NRRL B-3711).